We begin with the raw amino-acid sequence, 405 residues long: Probable tRNA sulfurtransferase (405 aa).

The 106-residue stretch at 60–165 folds into the THUMP domain; that stretch reads AEVDKRLKKV…QDAVYISNQL (106 aa). ATP is bound by residues 183–184, 208–209, Arg-265, Gly-287, and Gln-296; these read ML and HF.

This sequence belongs to the ThiI family.

It localises to the cytoplasm. It catalyses the reaction [ThiI sulfur-carrier protein]-S-sulfanyl-L-cysteine + a uridine in tRNA + 2 reduced [2Fe-2S]-[ferredoxin] + ATP + H(+) = [ThiI sulfur-carrier protein]-L-cysteine + a 4-thiouridine in tRNA + 2 oxidized [2Fe-2S]-[ferredoxin] + AMP + diphosphate. The catalysed reaction is [ThiS sulfur-carrier protein]-C-terminal Gly-Gly-AMP + S-sulfanyl-L-cysteinyl-[cysteine desulfurase] + AH2 = [ThiS sulfur-carrier protein]-C-terminal-Gly-aminoethanethioate + L-cysteinyl-[cysteine desulfurase] + A + AMP + 2 H(+). It participates in cofactor biosynthesis; thiamine diphosphate biosynthesis. Functionally, catalyzes the ATP-dependent transfer of a sulfur to tRNA to produce 4-thiouridine in position 8 of tRNAs, which functions as a near-UV photosensor. Also catalyzes the transfer of sulfur to the sulfur carrier protein ThiS, forming ThiS-thiocarboxylate. This is a step in the synthesis of thiazole, in the thiamine biosynthesis pathway. The sulfur is donated as persulfide by IscS. The sequence is that of Probable tRNA sulfurtransferase from Lactobacillus helveticus (strain DPC 4571).